The chain runs to 164 residues: Transcriptional repressor NrdR (164 aa).

The segment at Cys-3–Cys-34 is a zinc-finger region. The ATP-cone domain occupies Leu-46–Asp-136.

This sequence belongs to the NrdR family. The cofactor is Zn(2+).

Its function is as follows. Negatively regulates transcription of bacterial ribonucleotide reductase nrd genes and operons by binding to NrdR-boxes. In Micrococcus luteus (strain ATCC 4698 / DSM 20030 / JCM 1464 / CCM 169 / CCUG 5858 / IAM 1056 / NBRC 3333 / NCIMB 9278 / NCTC 2665 / VKM Ac-2230) (Micrococcus lysodeikticus), this protein is Transcriptional repressor NrdR.